A 200-amino-acid chain; its full sequence is Pyridoxine/pyridoxamine 5'-phosphate oxidase (200 aa).

Residues 49–54 (RMLLLK), 64–65 (YT), Arg70, Lys71, and Gln93 contribute to the FMN site. Lys54 is a binding site for substrate. Substrate-binding residues include Tyr111, Arg115, and Ser119. Residues 128–129 (QS) and Trp173 contribute to the FMN site. A substrate-binding site is contributed by 179 to 181 (RLH). Arg183 serves as a coordination point for FMN.

The protein belongs to the pyridoxamine 5'-phosphate oxidase family. Homodimer. FMN is required as a cofactor.

The enzyme catalyses pyridoxamine 5'-phosphate + O2 + H2O = pyridoxal 5'-phosphate + H2O2 + NH4(+). It carries out the reaction pyridoxine 5'-phosphate + O2 = pyridoxal 5'-phosphate + H2O2. Its pathway is cofactor metabolism; pyridoxal 5'-phosphate salvage; pyridoxal 5'-phosphate from pyridoxamine 5'-phosphate: step 1/1. It participates in cofactor metabolism; pyridoxal 5'-phosphate salvage; pyridoxal 5'-phosphate from pyridoxine 5'-phosphate: step 1/1. Its function is as follows. Catalyzes the oxidation of either pyridoxine 5'-phosphate (PNP) or pyridoxamine 5'-phosphate (PMP) into pyridoxal 5'-phosphate (PLP). This Gluconobacter oxydans (strain 621H) (Gluconobacter suboxydans) protein is Pyridoxine/pyridoxamine 5'-phosphate oxidase.